Reading from the N-terminus, the 413-residue chain is Glucose-1-phosphate adenylyltransferase (413 aa).

Residues Tyr-102, Gly-167, 182–183, and Ser-200 each bind alpha-D-glucose 1-phosphate; that span reads EK.

It belongs to the bacterial/plant glucose-1-phosphate adenylyltransferase family. In terms of assembly, homotetramer.

The enzyme catalyses alpha-D-glucose 1-phosphate + ATP + H(+) = ADP-alpha-D-glucose + diphosphate. Its pathway is glycan biosynthesis; glycogen biosynthesis. Involved in the biosynthesis of ADP-glucose, a building block required for the elongation reactions to produce glycogen. Catalyzes the reaction between ATP and alpha-D-glucose 1-phosphate (G1P) to produce pyrophosphate and ADP-Glc. This chain is Glucose-1-phosphate adenylyltransferase, found in Deinococcus radiodurans (strain ATCC 13939 / DSM 20539 / JCM 16871 / CCUG 27074 / LMG 4051 / NBRC 15346 / NCIMB 9279 / VKM B-1422 / R1).